Consider the following 650-residue polypeptide: Laccase-like multicopper oxidase 1 (650 aa).

The N-terminal stretch at 1 to 20 (MLLSKLSILLAKWLSVAVYA) is a signal peptide. 3 consecutive Plastocyanin-like domains span residues 41–151 (QVPS…IVED), 162–360 (ERIL…LRYN), and 439–595 (KPVL…VVGD). Cys46 and Cys254 are joined by a disulfide. N-linked (GlcNAc...) asparagine glycans are attached at residues Asn55 and Asn83. 4 residues coordinate Cu cation: His87, His89, His133, and His135. Residues His501, His504, His506, His576, Cys577, His578, and His582 each contribute to the Cu cation site. N-linked (GlcNAc...) asparagine glycosylation is present at Asn620.

It belongs to the multicopper oxidase family. In terms of assembly, monomer. Post-translationally, N-glycosylation Asn-55 and Asn-83 is involved in folding, conformational stability and laccase activity.

The catalysed reaction is 2 2',3,4-trihydroxy-trans-chalcone + O2 + 2 H(+) = 2 3',4'-dihydroxyaurone + 2 H2O. Retains almost half of its activity in presence of high salt concentrations up to 100 mM NaCl. Retains also more than 85% of its original activity in the presence of 1 mM EDTA, indicating a satisfactory resistance towards chelators, which is rare among metal-containing enzyme. The activity drops significantly in the presence of NaN(3) or SDS. Appears more active in the presence of methanol compared to ethanol, but acetone or DMSO addition severely affect remaining laccase activity. In terms of biological role, yellow laccase-like multicopper oxidase that is able to oxidize a variety of phenolic compounds including standard laccase substrates such as 2'-azino-bis(3-ethylbenzothiazoline-6-sulphonic acid) (ABTS) and 2,6-dimethoxyphenol (2,6-DMP). The existence of an ortho-hydroxy group is crucial for oxidation since pyrogallol and catechol, which contain ortho-hydroxy groups, are readily oxidized, which is not the case for resorcinol and hydroquinone, that contain meta- and para-hydroxy groups, respectively. The same is also true for the existence of a methoxy group in an ortho-position, since 2,6-DMP, guaiacol and ferulic and caffeic acids are also rather easily oxidized compared with the corresponding unsubstituted compound. Can be used for the bioconversion of 2',3,4-trihy-droxychalcone to 3',4'-dihydroxy-aurone, a bioactive aurone recently shown to possess inhibitory activity against several isoforms of the histone deacetylase complex (HDAC). This chain is Laccase-like multicopper oxidase 1, found in Thermothelomyces thermophilus (strain ATCC 42464 / BCRC 31852 / DSM 1799) (Sporotrichum thermophile).